Here is a 91-residue protein sequence, read N- to C-terminus: Small ribosomal subunit protein bS18 (91 aa).

A disordered region spans residues 1-21; sequence MSDERTPQRSSGPRKKRPFQR. Residues 12–21 show a composition bias toward basic residues; that stretch reads GPRKKRPFQR.

Belongs to the bacterial ribosomal protein bS18 family. Part of the 30S ribosomal subunit. Forms a tight heterodimer with protein bS6.

Binds as a heterodimer with protein bS6 to the central domain of the 16S rRNA, where it helps stabilize the platform of the 30S subunit. The sequence is that of Small ribosomal subunit protein bS18 from Geotalea uraniireducens (strain Rf4) (Geobacter uraniireducens).